We begin with the raw amino-acid sequence, 408 residues long: FAD-dependent monooxygenase nscC (408 aa).

Positions 1 to 20 (MASRLPILIIGAGISGLTTA) are cleaved as a signal peptide. FAD-binding residues include Glu-34 and Ala-45. N-linked (GlcNAc...) asparagine glycosylation is found at Asn-91 and Asn-103. Residue Arg-119 participates in FAD binding. 2 N-linked (GlcNAc...) asparagine glycosylation sites follow: Asn-170 and Asn-231. Positions 328 and 341 each coordinate FAD.

Belongs to the paxM FAD-dependent monooxygenase family. It depends on FAD as a cofactor.

It functions in the pathway secondary metabolite biosynthesis. Functionally, FAD-dependent monooxygenase; part of the gene cluster that mediates the biosynthesis of neosartoricin, a prenylated anthracenone that exhibits T-cell antiproliferative activity, suggestive of a physiological role as an immunosuppressive agent. The non-reducing polyketide synthase nscA probably synthesizes and cyclizes the decaketide backbone. The hydrolase nscB then mediates the product release through hydrolysis followed by spontaneous decarboxylation. The prenyltransferase nscD catalyzes the addition of the dimethylallyl group to the aromatic C5. The FAD-dependent monooxygenase nscC is then responsible for the stereospecific hydroxylation at C2. There is no gene encoding O-acetyltransferase in the nsc gene cluster; thus, the last step of 2-O-acetylation leading to neosartoricin may be catalyzed by an unidentified O-acetyltransferase. The chain is FAD-dependent monooxygenase nscC from Aspergillus fumigatus (strain ATCC MYA-4609 / CBS 101355 / FGSC A1100 / Af293) (Neosartorya fumigata).